The following is a 305-amino-acid chain: NAD kinase 2 (305 aa).

The active-site Proton acceptor is aspartate 78. NAD(+) is bound by residues 78–79 (DG), 152–153 (NE), aspartate 182, 193–198 (TAYSLS), and asparagine 251.

Belongs to the NAD kinase family. It depends on a divalent metal cation as a cofactor.

The protein localises to the cytoplasm. The enzyme catalyses NAD(+) + ATP = ADP + NADP(+) + H(+). In terms of biological role, involved in the regulation of the intracellular balance of NAD and NADP, and is a key enzyme in the biosynthesis of NADP. Catalyzes specifically the phosphorylation on 2'-hydroxyl of the adenosine moiety of NAD to yield NADP. Functions as a growth repressor under light-activated heterotrophic growth conditions and light and dark cycle conditions in the presence of glucose. NADP(H)/NAD(H) maintenance by slr0400 probably plays a significant role in modulating glycolysis and the TCA cycle to repress the growth rate and maintain the photosynthetic capacity. In Synechocystis sp. (strain ATCC 27184 / PCC 6803 / Kazusa), this protein is NAD kinase 2.